We begin with the raw amino-acid sequence, 719 residues long: Ribosomal RNA large subunit methyltransferase K/L (719 aa).

The region spanning 43–154 is the THUMP domain; the sequence is TQYRVLLWTR…REELVISLDL (112 aa).

The protein belongs to the methyltransferase superfamily. RlmKL family.

The protein resides in the cytoplasm. The catalysed reaction is guanosine(2445) in 23S rRNA + S-adenosyl-L-methionine = N(2)-methylguanosine(2445) in 23S rRNA + S-adenosyl-L-homocysteine + H(+). The enzyme catalyses guanosine(2069) in 23S rRNA + S-adenosyl-L-methionine = N(2)-methylguanosine(2069) in 23S rRNA + S-adenosyl-L-homocysteine + H(+). In terms of biological role, specifically methylates the guanine in position 2445 (m2G2445) and the guanine in position 2069 (m7G2069) of 23S rRNA. The polypeptide is Ribosomal RNA large subunit methyltransferase K/L (Pasteurella multocida (strain Pm70)).